A 345-amino-acid chain; its full sequence is L-rhamnose-proton symporter (345 aa).

10 helical membrane passes run 4 to 24, 38 to 58, 68 to 88, 101 to 121, 131 to 151, 175 to 195, 214 to 234, 259 to 279, 290 to 310, and 323 to 343; these read AITMGILWHLIGAASAACFYA, WSVGGVVSWLILPWVVSALLL, FSAATLLPVFLFGAMWGIGNI, MGIGIAIGITLIVGTLMTPLL, TAGGRMTLLGVFVALVGVAIV, LVLAVLCGVFSAGMSFAMDAA, LPSYVVIMGGGALINLGFCFI, VLLSALGGLMWYLQFFFYAWG, ISWMLHMSFYVLCGGIVGLLL, and VLSLGCVVIIVAANIVGLGMA.

This sequence belongs to the L-rhamnose transporter (TC 2.A.7.6) family.

Its subcellular location is the cell inner membrane. The enzyme catalyses L-rhamnopyranose(in) + H(+)(in) = L-rhamnopyranose(out) + H(+)(out). Functionally, uptake of L-rhamnose across the cytoplasmic membrane with the concomitant transport of protons into the cell (symport system). This is L-rhamnose-proton symporter from Cronobacter sakazakii (strain ATCC BAA-894) (Enterobacter sakazakii).